We begin with the raw amino-acid sequence, 275 residues long: Formamidopyrimidine-DNA glycosylase (275 aa).

Pro-2 (schiff-base intermediate with DNA) is an active-site residue. Glu-3 (proton donor) is an active-site residue. The active-site Proton donor; for beta-elimination activity is Lys-58. Residues His-91 and Arg-110 each coordinate DNA. The FPG-type zinc finger occupies Gln-238–Lys-272. Arg-262 (proton donor; for delta-elimination activity) is an active-site residue.

The protein belongs to the FPG family. Monomer. Requires Zn(2+) as cofactor.

The catalysed reaction is Hydrolysis of DNA containing ring-opened 7-methylguanine residues, releasing 2,6-diamino-4-hydroxy-5-(N-methyl)formamidopyrimidine.. It carries out the reaction 2'-deoxyribonucleotide-(2'-deoxyribose 5'-phosphate)-2'-deoxyribonucleotide-DNA = a 3'-end 2'-deoxyribonucleotide-(2,3-dehydro-2,3-deoxyribose 5'-phosphate)-DNA + a 5'-end 5'-phospho-2'-deoxyribonucleoside-DNA + H(+). Its function is as follows. Involved in base excision repair of DNA damaged by oxidation or by mutagenic agents. Acts as a DNA glycosylase that recognizes and removes damaged bases. Has a preference for oxidized purines, such as 7,8-dihydro-8-oxoguanine (8-oxoG). Has AP (apurinic/apyrimidinic) lyase activity and introduces nicks in the DNA strand. Cleaves the DNA backbone by beta-delta elimination to generate a single-strand break at the site of the removed base with both 3'- and 5'-phosphates. This is Formamidopyrimidine-DNA glycosylase from Streptococcus pyogenes serotype M6 (strain ATCC BAA-946 / MGAS10394).